The chain runs to 504 residues: Cytochrome P450 71B4 (504 aa).

A helical membrane pass occupies residues M1 to F21. Residue C446 coordinates heme.

Belongs to the cytochrome P450 family. The cofactor is heme.

The protein resides in the membrane. This is Cytochrome P450 71B4 (CYP71B4) from Arabidopsis thaliana (Mouse-ear cress).